A 21-amino-acid polypeptide reads, in one-letter code: Fibrinogen beta chain (21 aa).

Gln-1 is subject to Pyrrolidone carboxylic acid. Positions 1-11 (QHSTDYDEVED) are enriched in acidic residues. The tract at residues 1–21 (QHSTDYDEVEDDRAKLHLDAR) is disordered. Thr-4 carries O-linked (GalNAc...) threonine glycosylation. Residue Tyr-6 is modified to Sulfotyrosine. Over residues 12–21 (DRAKLHLDAR) the composition is skewed to basic and acidic residues.

In terms of assembly, heterohexamer; disulfide linked. Contains 2 sets of 3 non-identical chains (alpha, beta and gamma). The 2 heterotrimers are in head to head conformation with the N-termini in a small central domain. Conversion of fibrinogen to fibrin is triggered by thrombin, which cleaves fibrinopeptides A and B from alpha and beta chains, and thus exposes the N-terminal polymerization sites responsible for the formation of the soft clot.

It is found in the secreted. In terms of biological role, cleaved by the protease thrombin to yield monomers which, together with fibrinogen alpha (FGA) and fibrinogen gamma (FGG), polymerize to form an insoluble fibrin matrix. Fibrin has a major function in hemostasis as one of the primary components of blood clots. In addition, functions during the early stages of wound repair to stabilize the lesion and guide cell migration during re-epithelialization. Was originally thought to be essential for platelet aggregation, based on in vitro studies using anticoagulated blood. However subsequent studies have shown that it is not absolutely required for thrombus formation in vivo. Enhances expression of SELP in activated platelets. Maternal fibrinogen is essential for successful pregnancy. Fibrin deposition is also associated with infection, where it protects against IFNG-mediated hemorrhage. May also facilitate the antibacterial immune response via both innate and T-cell mediated pathways. This Muntiacus muntjak (Barking deer) protein is Fibrinogen beta chain (FGB).